Here is a 688-residue protein sequence, read N- to C-terminus: DNA-directed RNA polymerase subunit beta' (688 aa).

Zn(2+) contacts are provided by Cys69, Cys71, Cys87, and Cys90. Positions 489, 491, and 493 each coordinate Mg(2+).

It belongs to the RNA polymerase beta' chain family. RpoC1 subfamily. In plastids the minimal PEP RNA polymerase catalytic core is composed of four subunits: alpha, beta, beta', and beta''. When a (nuclear-encoded) sigma factor is associated with the core the holoenzyme is formed, which can initiate transcription. Mg(2+) is required as a cofactor. Requires Zn(2+) as cofactor.

Its subcellular location is the plastid. The protein resides in the chloroplast. It carries out the reaction RNA(n) + a ribonucleoside 5'-triphosphate = RNA(n+1) + diphosphate. In terms of biological role, DNA-dependent RNA polymerase catalyzes the transcription of DNA into RNA using the four ribonucleoside triphosphates as substrates. The sequence is that of DNA-directed RNA polymerase subunit beta' from Piper cenocladum (Ant piper).